Here is a 488-residue protein sequence, read N- to C-terminus: Proline--tRNA ligase (488 aa).

It belongs to the class-II aminoacyl-tRNA synthetase family. ProS type 3 subfamily. In terms of assembly, homodimer.

Its subcellular location is the cytoplasm. It catalyses the reaction tRNA(Pro) + L-proline + ATP = L-prolyl-tRNA(Pro) + AMP + diphosphate. Its function is as follows. Catalyzes the attachment of proline to tRNA(Pro) in a two-step reaction: proline is first activated by ATP to form Pro-AMP and then transferred to the acceptor end of tRNA(Pro). The sequence is that of Proline--tRNA ligase from Borrelia garinii subsp. bavariensis (strain ATCC BAA-2496 / DSM 23469 / PBi) (Borreliella bavariensis).